The chain runs to 496 residues: Rhamnulokinase (496 aa).

An ATP-binding site is contributed by 13–17 (ASSGR). Substrate contacts are provided by residues G83 and 236-238 (HDT). D237 acts as the Proton acceptor in catalysis. ATP is bound at residue T259. N296 provides a ligand contact to substrate. Q304 contributes to the ATP binding site. C353 and C370 are joined by a disulfide. ATP is bound at residue G402. C413 and C417 are disulfide-bonded.

This sequence belongs to the rhamnulokinase family. Mg(2+) serves as cofactor.

It catalyses the reaction L-rhamnulose + ATP = L-rhamnulose 1-phosphate + ADP + H(+). It participates in carbohydrate degradation; L-rhamnose degradation; glycerone phosphate from L-rhamnose: step 2/3. Functionally, involved in the catabolism of L-rhamnose (6-deoxy-L-mannose). Catalyzes the transfer of the gamma-phosphate group from ATP to the 1-hydroxyl group of L-rhamnulose to yield L-rhamnulose 1-phosphate. This chain is Rhamnulokinase, found in Pectobacterium atrosepticum (strain SCRI 1043 / ATCC BAA-672) (Erwinia carotovora subsp. atroseptica).